We begin with the raw amino-acid sequence, 103 residues long: Small ribosomal subunit protein uS10 (103 aa).

Belongs to the universal ribosomal protein uS10 family. In terms of assembly, part of the 30S ribosomal subunit.

In terms of biological role, involved in the binding of tRNA to the ribosomes. The polypeptide is Small ribosomal subunit protein uS10 (Hydrogenovibrio crunogenus (strain DSM 25203 / XCL-2) (Thiomicrospira crunogena)).